Here is a 351-residue protein sequence, read N- to C-terminus: Holliday junction branch migration complex subunit RuvB (351 aa).

Residues 1 to 189 form a large ATPase domain (RuvB-L) region; that stretch reads MTAHDADWSD…FGFTAHMDFY (189 aa). ATP is bound by residues Leu-28, Arg-29, Gly-70, Lys-73, Thr-74, Ser-75, 136-138, Arg-179, Tyr-189, and Arg-226; that span reads EDF. Thr-74 contributes to the Mg(2+) binding site. Residues 190-260 are small ATPAse domain (RuvB-S); sequence EPAELQQVLA…VAKAALAVYD (71 aa). Residues 263–351 form a head domain (RuvB-H) region; sequence ELGLDRLDRA…AGLGQPGLFD (89 aa). DNA contacts are provided by Arg-318 and Arg-323.

This sequence belongs to the RuvB family. Homohexamer. Forms an RuvA(8)-RuvB(12)-Holliday junction (HJ) complex. HJ DNA is sandwiched between 2 RuvA tetramers; dsDNA enters through RuvA and exits via RuvB. An RuvB hexamer assembles on each DNA strand where it exits the tetramer. Each RuvB hexamer is contacted by two RuvA subunits (via domain III) on 2 adjacent RuvB subunits; this complex drives branch migration. In the full resolvosome a probable DNA-RuvA(4)-RuvB(12)-RuvC(2) complex forms which resolves the HJ.

It is found in the cytoplasm. The catalysed reaction is ATP + H2O = ADP + phosphate + H(+). Its function is as follows. The RuvA-RuvB-RuvC complex processes Holliday junction (HJ) DNA during genetic recombination and DNA repair, while the RuvA-RuvB complex plays an important role in the rescue of blocked DNA replication forks via replication fork reversal (RFR). RuvA specifically binds to HJ cruciform DNA, conferring on it an open structure. The RuvB hexamer acts as an ATP-dependent pump, pulling dsDNA into and through the RuvAB complex. RuvB forms 2 homohexamers on either side of HJ DNA bound by 1 or 2 RuvA tetramers; 4 subunits per hexamer contact DNA at a time. Coordinated motions by a converter formed by DNA-disengaged RuvB subunits stimulates ATP hydrolysis and nucleotide exchange. Immobilization of the converter enables RuvB to convert the ATP-contained energy into a lever motion, pulling 2 nucleotides of DNA out of the RuvA tetramer per ATP hydrolyzed, thus driving DNA branch migration. The RuvB motors rotate together with the DNA substrate, which together with the progressing nucleotide cycle form the mechanistic basis for DNA recombination by continuous HJ branch migration. Branch migration allows RuvC to scan DNA until it finds its consensus sequence, where it cleaves and resolves cruciform DNA. This Mycobacterium avium (strain 104) protein is Holliday junction branch migration complex subunit RuvB.